Here is a 562-residue protein sequence, read N- to C-terminus: Delta-1-pyrroline-5-carboxylate dehydrogenase, mitochondrial (562 aa).

The transit peptide at 1–23 (MLPLPSLRRSLLSHAWRGAGLRW) directs the protein to the mitochondrion. The residue at position 30 (Lys-30) is an N6-succinyllysine. Ser-43 is modified (phosphoserine). Position 51 is an N6-acetyllysine (Lys-51). N6-acetyllysine; alternate is present on residues Lys-92, Lys-98, Lys-113, Lys-129, and Lys-174. An N6-succinyllysine; alternate mark is found at Lys-92, Lys-98, Lys-113, Lys-129, and Lys-174. NAD(+) is bound by residues Ser-207, Lys-232, and 285 to 289 (GSVPT). Glu-313 serves as the catalytic Proton acceptor. Position 317 is an N6-acetyllysine (Lys-317). Lys-346 carries the N6-succinyllysine modification. Catalysis depends on Cys-347, which acts as the Nucleophile. Residue Lys-357 is modified to N6-acetyllysine; alternate. Lys-357 bears the N6-succinyllysine; alternate mark. Residues Lys-364 and Lys-375 each carry the N6-acetyllysine modification. Lys-394 bears the N6-succinyllysine mark. Glu-446 contributes to the NAD(+) binding site. Lys-461 is modified (N6-acetyllysine). The residue at position 508 (Lys-508) is an N6-acetyllysine; alternate. Position 508 is an N6-succinyllysine; alternate (Lys-508). A substrate-binding site is contributed by Ser-512. Residues Lys-530 and Lys-551 each carry the N6-acetyllysine modification.

This sequence belongs to the aldehyde dehydrogenase family. As to quaternary structure, homodimer. In terms of processing, acetylation of Lys-98, Lys-113 and Lys-401 is observed in liver mitochondria from fasted mice but not from fed mice.

It localises to the mitochondrion matrix. The enzyme catalyses L-glutamate 5-semialdehyde + NAD(+) + H2O = L-glutamate + NADH + 2 H(+). It functions in the pathway amino-acid degradation; L-proline degradation into L-glutamate; L-glutamate from L-proline: step 2/2. Its function is as follows. Irreversible conversion of delta-1-pyrroline-5-carboxylate (P5C), derived either from proline or ornithine, to glutamate. This is a necessary step in the pathway interconnecting the urea and tricarboxylic acid cycles. The preferred substrate is glutamic gamma-semialdehyde, other substrates include succinic, glutaric and adipic semialdehydes. The polypeptide is Delta-1-pyrroline-5-carboxylate dehydrogenase, mitochondrial (Aldh4a1) (Mus musculus (Mouse)).